The sequence spans 270 residues: Probable 6-oxopurine nucleoside phosphorylase (270 aa).

Phosphate-binding positions include serine 10 and 48–49 (RH). Methionine 191 contacts substrate. Threonine 192 serves as a coordination point for phosphate. 215–217 (NYA) lines the substrate pocket.

Belongs to the PNP/MTAP phosphorylase family. MTAP subfamily. Homohexamer. Dimer of a homotrimer.

It catalyses the reaction a purine D-ribonucleoside + phosphate = a purine nucleobase + alpha-D-ribose 1-phosphate. It functions in the pathway purine metabolism; purine nucleoside salvage. Purine nucleoside phosphorylase which is highly specific for 6-oxopurine nucleosides. Cleaves guanosine or inosine to respective bases and sugar-1-phosphate molecules. Involved in purine salvage. The protein is Probable 6-oxopurine nucleoside phosphorylase of Korarchaeum cryptofilum (strain OPF8).